We begin with the raw amino-acid sequence, 508 residues long: Non-structural protein 1 (508 aa).

Over residues 424 to 453 the composition is skewed to polar residues; it reads NTESTTTNNAQSPVSDPVNASANVKTSPAG. Positions 424–464 are disordered; sequence NTESTTTNNAQSPVSDPVNASANVKTSPAGTHTDESVMKKE. The segment covering 455 to 464 has biased composition (basic and acidic residues); the sequence is HTDESVMKKE.

The polypeptide is Non-structural protein 1 (Segment-5) (Banna virus (BAV)).